Here is a 267-residue protein sequence, read N- to C-terminus: Dihydropteroate synthase (267 aa).

A Pterin-binding domain is found at 1–251; the sequence is MTKTKIMGIL…NVELNAKLAK (251 aa). Asparagine 11 lines the Mg(2+) pocket. (7,8-dihydropterin-6-yl)methyl diphosphate contacts are provided by residues threonine 51, aspartate 84, asparagine 103, aspartate 167, lysine 203, and 239–241; that span reads RVH.

Belongs to the DHPS family. Homodimer. Mg(2+) serves as cofactor.

The catalysed reaction is (7,8-dihydropterin-6-yl)methyl diphosphate + 4-aminobenzoate = 7,8-dihydropteroate + diphosphate. It functions in the pathway cofactor biosynthesis; tetrahydrofolate biosynthesis; 7,8-dihydrofolate from 2-amino-4-hydroxy-6-hydroxymethyl-7,8-dihydropteridine diphosphate and 4-aminobenzoate: step 1/2. Catalyzes the condensation of para-aminobenzoate (pABA) with 6-hydroxymethyl-7,8-dihydropterin diphosphate (DHPt-PP) to form 7,8-dihydropteroate (H2Pte), the immediate precursor of folate derivatives. The polypeptide is Dihydropteroate synthase (folP) (Staphylococcus aureus (strain MRSA252)).